The following is a 387-amino-acid chain: Alkanesulfonate monooxygenase (387 aa).

It belongs to the SsuD family.

The enzyme catalyses an alkanesulfonate + FMNH2 + O2 = an aldehyde + FMN + sulfite + H2O + 2 H(+). Its function is as follows. Catalyzes the desulfonation of aliphatic sulfonates. The protein is Alkanesulfonate monooxygenase of Cupriavidus metallidurans (strain ATCC 43123 / DSM 2839 / NBRC 102507 / CH34) (Ralstonia metallidurans).